A 185-amino-acid chain; its full sequence is Ethylene-responsive transcription factor ERF017 (185 aa).

Positions 11–68 (KYKGVRKRKWGKWVSEIRLPNSRERIWLGSYDTPEKAARAFDAALYCLRGNNAKFNFP) form a DNA-binding region, AP2/ERF.

This sequence belongs to the AP2/ERF transcription factor family. ERF subfamily.

The protein resides in the nucleus. Its function is as follows. Probably acts as a transcriptional activator. Binds to the GCC-box pathogenesis-related promoter element. May be involved in the regulation of gene expression by stress factors and by components of stress signal transduction pathways. This Arabidopsis thaliana (Mouse-ear cress) protein is Ethylene-responsive transcription factor ERF017 (ERF017).